The chain runs to 338 residues: Ankyrin-repeat domain containing transcription coregulator asaA (338 aa).

Residues 1-10 (MGAPHEEIQA) are compositionally biased toward basic and acidic residues. Disordered regions lie at residues 1–70 (MGAP…LRST) and 112–137 (ASSVSPSSSAGPLSSSPSPSQRPFID). A compositionally biased stretch (basic residues) spans 11-33 (LKRRREQNRLAQRRRRDNVRRRL). Positions 42–70 (SPASASQTSLCSSTDSRVTLNPHQSLRST) are enriched in polar residues. Residues 112–130 (ASSVSPSSSAGPLSSSPSP) show a composition bias toward low complexity. 3 ANK repeats span residues 235–264 (RWTTALHMAVSQGNFSVMRLLLSYGADPNA), 268–297 (EGATALHVGVMNGNYTMVAELLQRGADPTL), and 301–330 (AGWLPLHQAVHAGDEGCVRVLLEADQPVDY).

Its pathway is secondary metabolite biosynthesis. In terms of biological role, transcription coregulator involved in regulation of gene cluster that mediates the biosynthesis of aspergillic acid, a hydroxamic acid-containing pyrazinone with aliphatic side chains that originates from leucine (Leu) and isoleucine (Ile). Aspergillic acid has antibiotic properties and was shown to be lethal to mice. The chain is Ankyrin-repeat domain containing transcription coregulator asaA from Aspergillus flavus (strain ATCC 200026 / FGSC A1120 / IAM 13836 / NRRL 3357 / JCM 12722 / SRRC 167).